The following is a 340-amino-acid chain: Putative esterase YheT (340 aa).

The region spanning 73–312 (PRLVVFHGLE…TEHGGHVGFI (240 aa)) is the AB hydrolase-1 domain. Residues S153, D280, and H308 each act as charge relay system in the active site.

It belongs to the AB hydrolase superfamily. AB hydrolase 4 family.

The chain is Putative esterase YheT (yheT) from Escherichia coli (strain K12).